A 2588-amino-acid chain; its full sequence is Histone-lysine N-methyltransferase, H3 lysine-36 specific (2588 aa).

Serine 110 and serine 118 each carry phosphoserine. 2 disordered regions span residues 209–264 and 277–307; these read GSEQ…LGDT and LSFQDDPDSSPSPLGNMLEIPGTSSPSTSQE. The span at 235–249 shows a compositional bias: basic and acidic residues; the sequence is EKQKNKQRSEVDGSN. Over residues 298 to 307 the composition is skewed to polar residues; sequence GTSSPSTSQE. A phosphoserine mark is found at serine 380 and serine 383. Positions 383 to 403 are disordered; that stretch reads SADEKEKPCAKSRVRKSSDNI. Lysine 802 is covalently cross-linked (Glycyl lysine isopeptide (Lys-Gly) (interchain with G-Cter in SUMO2)). 3 disordered regions span residues 830 to 899, 947 to 987, and 1008 to 1133; these read ASYR…SDKR, ERKR…PGKE, and FDSK…PRLN. The span at 855 to 874 shows a compositional bias: polar residues; that stretch reads GSSTPNSEKPGDSTQDSVHQ. Over residues 881–895 the composition is skewed to low complexity; the sequence is SALSGELSSSLSSLA. Residues 1008-1033 are compositionally biased toward basic and acidic residues; the sequence is FDSKAKQSDPDKNLEKEPSFENRKGP. Positions 1054–1073 are enriched in basic residues; the sequence is PKKRWQRLNQRRPKPGKRAN. Lysine 1237 is covalently cross-linked (Glycyl lysine isopeptide (Lys-Gly) (interchain with G-Cter in SUMO2)). The interval 1279 to 1324 is disordered; the sequence is ASPRPALESEELLVKTPGNYESKRQRKPTKKLLESNDLDPGFMPKK. Serine 1408 carries the phosphoserine modification. PHD-type zinc fingers lie at residues 1441–1487, 1488–1544, and 1605–1649; these read ENVC…CHTG, IHTC…CHAA, and VSWC…CKAG. The PWWP domain maps to 1654–1716; sequence YREIVWVKVG…QARVFPYMEG (63 aa). The AWS domain occupies 1788 to 1838; it reads SEIPRCNCKATDENPCGIDSECINRMLLYECHPTVCPAGVRCQNQCFSKRQ. The SET domain maps to 1840–1957; sequence PDVEIFRTLQ…AGTELTFNYN (118 aa). S-adenosyl-L-methionine contacts are provided by residues 1850–1852, 1892–1895, 1918–1919, asparagine 1963, and lysine 1969; these read RGW, TNFY, and NH. Residues 1958–1964 form an inhibits enzyme activity in the absence of bound histone region; it reads LECLGNG. Positions 1964–1980 constitute a Post-SET domain; it reads GKTVCKCGAPNCSGFLG. The segment at 1989–2010 is disordered; sequence VTEEKSRKFKRKPHGKRRSQGE. Basic residues predominate over residues 1995 to 2006; the sequence is RKFKRKPHGKRR. The segment at 2016–2063 adopts a PHD-type 4; atypical zinc-finger fold; it reads EDECFSCGDAGQLVSCKKPGCPKVYHADCLNLTKRPAGKWECPWHQCD. 4 disordered regions span residues 2105–2320, 2333–2423, 2447–2521, and 2560–2588; these read PCGP…PPPE, KEKA…PSEH, YESA…WGLG, and RGQDPKPENAIQALNQAPSSRKCADSEKK. Basic and acidic residues predominate over residues 2179-2196; that stretch reads RPPERTDSSSHLLDRIRD. Over residues 2201 to 2212 the composition is skewed to polar residues; sequence GTKSQSLVSSQR. Residues 2213 to 2223 are compositionally biased toward basic and acidic residues; it reads PQDRPPAKEGP. Low complexity predominate over residues 2232–2249; the sequence is SPMTRPSSSPSVSSLPLE. The span at 2250–2261 shows a compositional bias: basic and acidic residues; it reads RPLRMTDSRLDK. Serine 2267 carries the phosphoserine modification. The residue at position 2360 (threonine 2360) is a Phosphothreonine. Serine 2369 carries the phosphoserine modification. A Glycyl lysine isopeptide (Lys-Gly) (interchain with G-Cter in SUMO2) cross-link involves residue lysine 2509.

Belongs to the class V-like SAM-binding methyltransferase superfamily. Interacts with AR DNA- and ligand-binding domains. Interacts with the ligand-binding domains of RARA and THRA in the absence of ligand; in the presence of ligand the interaction is severely disrupted but some binding still occurs. Interacts with the ligand-binding domains of RXRA and ESRRA only in the presence of ligand. Interacts with ZNF496. In terms of tissue distribution, expressed in the embryo and the outer region of the uterine decidua at early post-implantation 5.5 dpc stage. Uniformly expressed in embryonic and extraembryonic tissues during gastrulation stage 7.5 dpc. Expressed differentially after stage 14.5 dpc with highest expression in proliferating cells. Enriched in the telencephalic region of the brain, spinal cord, intestinal crypt, tooth buds, thymus and salivary glands at stage 16.5 dpc. Also expressed in the ossification region of developing bones and in the periosteum.

It is found in the nucleus. The protein localises to the chromosome. It catalyses the reaction L-lysyl(36)-[histone H3] + 2 S-adenosyl-L-methionine = N(6),N(6)-dimethyl-L-lysyl(36)-[histone H3] + 2 S-adenosyl-L-homocysteine + 2 H(+). In terms of biological role, histone methyltransferase that dimethylates Lys-36 of histone H3 (H3K36me2). Transcriptional intermediary factor capable of negatively influencing transcription. May also positively influence transcription. Essential for early post-implantation development. In Mus musculus (Mouse), this protein is Histone-lysine N-methyltransferase, H3 lysine-36 specific.